The sequence spans 856 residues: Translation initiation factor IF-2 (856 aa).

2 disordered regions span residues 1–248 and 254–273; these read MSDN…ARAR and KRAR…QQKQ. A compositionally biased stretch (polar residues) spans 22 to 38; the sequence is ETGQVKQSFSHGRSNTV. Residues 83–93 show a composition bias toward pro residues; sequence APRPAPAPIPT. Residues 100 to 150 are compositionally biased toward basic and acidic residues; sequence LERREQQERLLREAEEARMAALEETRRREERAKAEATEEERRRAEENRRAE. Over residues 156-196 the composition is skewed to low complexity; that stretch reads AAAAAAAAATAEAETAAAAPREEAPAAAGTAEEAPRTSSST. Pro residues predominate over residues 197–209; the sequence is MPPPRRFTPVPSP. Positions 210–229 are enriched in basic and acidic residues; the sequence is KRPEPPRPQQRDRKGDDRRQ. The tr-type G domain occupies 356–526; that stretch reads PRPPVVTIMG…ELQAELLELK (171 aa). Residues 365–372 are G1; it reads GHVDHGKT. 365 to 372 is a binding site for GTP; the sequence is GHVDHGKT. The segment at 390-394 is G2; it reads GITQH. Positions 412–415 are G3; it reads DTPG. GTP contacts are provided by residues 412–416 and 466–469; these read DTPGH and NKMD. The G4 stretch occupies residues 466–469; sequence NKMD. The interval 502–504 is G5; the sequence is SAL.

Belongs to the TRAFAC class translation factor GTPase superfamily. Classic translation factor GTPase family. IF-2 subfamily.

Its subcellular location is the cytoplasm. In terms of biological role, one of the essential components for the initiation of protein synthesis. Protects formylmethionyl-tRNA from spontaneous hydrolysis and promotes its binding to the 30S ribosomal subunits. Also involved in the hydrolysis of GTP during the formation of the 70S ribosomal complex. This is Translation initiation factor IF-2 from Rhizorhabdus wittichii (strain DSM 6014 / CCUG 31198 / JCM 15750 / NBRC 105917 / EY 4224 / RW1) (Sphingomonas wittichii).